A 157-amino-acid chain; its full sequence is Nascent polypeptide-associated complex subunit beta (157 aa).

The interval 1-31 is disordered; sequence MPVDPEKLAKLQKSTAKKVGGSRVKAKKGVK. Residues 33–98 form the NAC-A/B domain; it reads EQDDTKLIET…PQEKNITQLI (66 aa). A disordered region spans residues 125-157; it reads NPKDFGAAGEAGATEEANEDIPDLVDQKFDDVE. Positions 130–139 are enriched in low complexity; it reads GAAGEAGATE.

This sequence belongs to the NAC-beta family. In terms of assembly, part of the nascent polypeptide-associated complex (NAC), consisting of EGD2 and EGD1. NAC associates with ribosomes via EGD1.

It localises to the cytoplasm. It is found in the nucleus. Its function is as follows. Component of the nascent polypeptide-associated complex (NAC), a dynamic component of the ribosomal exit tunnel, protecting the emerging polypeptides from interaction with other cytoplasmic proteins to ensure appropriate nascent protein targeting. The NAC complex also promotes mitochondrial protein import by enhancing productive ribosome interactions with the outer mitochondrial membrane and blocks the inappropriate interaction of ribosomes translating non-secretory nascent polypeptides with translocation sites in the membrane of the endoplasmic reticulum. EGD1 may act as a transcription factor that exert a negative effect on the expression of several genes that are transcribed by RNA polymerase II. In Lodderomyces elongisporus (strain ATCC 11503 / CBS 2605 / JCM 1781 / NBRC 1676 / NRRL YB-4239) (Yeast), this protein is Nascent polypeptide-associated complex subunit beta (EGD1).